The primary structure comprises 294 residues: Elongation factor Ts (294 aa).

The involved in Mg(2+) ion dislocation from EF-Tu stretch occupies residues 82–85 (TDFV).

The protein belongs to the EF-Ts family.

The protein resides in the cytoplasm. Its function is as follows. Associates with the EF-Tu.GDP complex and induces the exchange of GDP to GTP. It remains bound to the aminoacyl-tRNA.EF-Tu.GTP complex up to the GTP hydrolysis stage on the ribosome. The chain is Elongation factor Ts from Nitrosomonas eutropha (strain DSM 101675 / C91 / Nm57).